The following is a 248-amino-acid chain: PF03932 family protein CutC (248 aa).

It belongs to the CutC family. As to quaternary structure, homodimer.

The protein localises to the cytoplasm. This chain is PF03932 family protein CutC, found in Shigella dysenteriae serotype 1 (strain Sd197).